Consider the following 230-residue polypeptide: Sugar fermentation stimulation protein homolog (230 aa).

The protein belongs to the SfsA family.

This Clostridium acetobutylicum (strain ATCC 824 / DSM 792 / JCM 1419 / IAM 19013 / LMG 5710 / NBRC 13948 / NRRL B-527 / VKM B-1787 / 2291 / W) protein is Sugar fermentation stimulation protein homolog.